Here is an 88-residue protein sequence, read N- to C-terminus: Large ribosomal subunit protein eL37 (88 aa).

Zn(2+)-binding residues include cysteine 19, cysteine 22, cysteine 34, and cysteine 37. The segment at 19 to 37 adopts a C4-type zinc-finger fold; sequence CNRCGKRSFHVQKKTCASC.

The protein belongs to the eukaryotic ribosomal protein eL37 family. Zn(2+) is required as a cofactor.

In terms of biological role, binds to the 23S rRNA. In Debaryomyces hansenii (strain ATCC 36239 / CBS 767 / BCRC 21394 / JCM 1990 / NBRC 0083 / IGC 2968) (Yeast), this protein is Large ribosomal subunit protein eL37 (RPL37).